The primary structure comprises 57 residues: Large ribosomal subunit protein bL33 (57 aa).

The protein belongs to the bacterial ribosomal protein bL33 family.

This is Large ribosomal subunit protein bL33 from Shewanella sp. (strain W3-18-1).